An 858-amino-acid chain; its full sequence is Alanine--tRNA ligase (858 aa).

Positions 550, 554, 652, and 656 each coordinate Zn(2+).

The protein belongs to the class-II aminoacyl-tRNA synthetase family. Zn(2+) serves as cofactor.

The protein resides in the cytoplasm. The catalysed reaction is tRNA(Ala) + L-alanine + ATP = L-alanyl-tRNA(Ala) + AMP + diphosphate. In terms of biological role, catalyzes the attachment of alanine to tRNA(Ala) in a two-step reaction: alanine is first activated by ATP to form Ala-AMP and then transferred to the acceptor end of tRNA(Ala). Also edits incorrectly charged Ser-tRNA(Ala) and Gly-tRNA(Ala) via its editing domain. This Pseudothermotoga lettingae (strain ATCC BAA-301 / DSM 14385 / NBRC 107922 / TMO) (Thermotoga lettingae) protein is Alanine--tRNA ligase.